We begin with the raw amino-acid sequence, 495 residues long: Glutamate--tRNA ligase (495 aa).

Positions 13 to 23 match the 'HIGH' region motif; sequence PSPTGTPHVGL. The short motif at 257–261 is the 'KMSKS' region element; sequence KLSKR. Position 260 (lysine 260) interacts with ATP.

It belongs to the class-I aminoacyl-tRNA synthetase family. Glutamate--tRNA ligase type 1 subfamily. Monomer.

The protein resides in the cytoplasm. The enzyme catalyses tRNA(Glu) + L-glutamate + ATP = L-glutamyl-tRNA(Glu) + AMP + diphosphate. In terms of biological role, catalyzes the attachment of glutamate to tRNA(Glu) in a two-step reaction: glutamate is first activated by ATP to form Glu-AMP and then transferred to the acceptor end of tRNA(Glu). This chain is Glutamate--tRNA ligase, found in Mycolicibacterium vanbaalenii (strain DSM 7251 / JCM 13017 / BCRC 16820 / KCTC 9966 / NRRL B-24157 / PYR-1) (Mycobacterium vanbaalenii).